The chain runs to 1158 residues: cGMP-specific 3',5'-cyclic phosphodiesterase (1158 aa).

Disordered regions lie at residues 1 to 137 (MTDV…SQHD) and 195 to 216 (SPTV…SIPE). Residues 30-71 (ATTSAAASASSSQAKPLTNGAKKAATAAAAAGAEEGGASASN) are compositionally biased toward low complexity. The segment covering 108–135 (GSTSKSSSIHTQTSQQERAGRPTSSASQ) has biased composition (polar residues). A compositionally biased stretch (low complexity) spans 202-215 (SPRSLSNSSASSIP). 2 consecutive GAF domains span residues 242–394 (DIDV…GIGI) and 426–640 (NLEC…GLGI). One can recognise a PDEase domain in the interval 670–993 (SQDQTEKLTQ…RNWQDLAEKV (324 aa)). The active-site Proton donor is the His746. His750, His786, Asp787, and Asp897 together coordinate a divalent metal cation. Disordered stretches follow at residues 1034–1065 (QSQQ…TGAL) and 1097–1158 (VSED…CALL). Residues 1041 to 1052 (GSEDSHTPEHQR) show a composition bias toward basic and acidic residues. Over residues 1114-1130 (AAGSMGRMSASSSTSSA) the composition is skewed to low complexity. Positions 1148–1158 (SKKRSKLCALL) are enriched in basic residues. Cys1155 carries the cysteine methyl ester modification. Residue Cys1155 is the site of S-farnesyl cysteine attachment. Positions 1156 to 1158 (ALL) are cleaved as a propeptide — removed in mature form.

Belongs to the cyclic nucleotide phosphodiesterase family. In terms of assembly, interacts with PrBP. A divalent metal cation is required as a cofactor.

It is found in the cell membrane. The enzyme catalyses 3',5'-cyclic GMP + H2O = GMP + H(+). In terms of biological role, has a role regulating cGMP transport in Malpighian tubule principal cells. The polypeptide is cGMP-specific 3',5'-cyclic phosphodiesterase (Drosophila ananassae (Fruit fly)).